Consider the following 512-residue polypeptide: 2,3-bisphosphoglycerate-independent phosphoglycerate mutase (512 aa).

Mn(2+) is bound by residues Asp-12 and Ser-62. The active-site Phosphoserine intermediate is Ser-62. Substrate contacts are provided by residues His-123, 153-154 (RD), Arg-185, Arg-191, 260-263 (RPDR), and Lys-333. Residues Asp-400, His-404, Asp-441, His-442, and His-460 each coordinate Mn(2+).

Belongs to the BPG-independent phosphoglycerate mutase family. Monomer. It depends on Mn(2+) as a cofactor.

The catalysed reaction is (2R)-2-phosphoglycerate = (2R)-3-phosphoglycerate. The protein operates within carbohydrate degradation; glycolysis; pyruvate from D-glyceraldehyde 3-phosphate: step 3/5. Its function is as follows. Catalyzes the interconversion of 2-phosphoglycerate and 3-phosphoglycerate. The chain is 2,3-bisphosphoglycerate-independent phosphoglycerate mutase from Clostridium beijerinckii (strain ATCC 51743 / NCIMB 8052) (Clostridium acetobutylicum).